Reading from the N-terminus, the 774-residue chain is Effector protein hopW1-1 (774 aa).

Disordered stretches follow at residues Met1–Gln33 and Cys301–Gln340. Residues Thr9–Ser23 show a composition bias toward low complexity. Residues Ala24–Gln33 are compositionally biased toward polar residues.

It belongs to the HopW family. As to quaternary structure, interacts (via C-terminus) with Arabidopsis WIN1, WIN2 and WIN3.

The protein resides in the secreted. Functionally, induces hypersensitive response (HR). In Pseudomonas syringae pv. maculicola, this protein is Effector protein hopW1-1 (hopW1-1).